The following is a 554-amino-acid chain: Glutamine--tRNA ligase (554 aa).

Positions 33–43 (PEPNGYLHIGH) match the 'HIGH' region motif. ATP is bound by residues 34–36 (EPN) and 40–46 (HIGHAKS). L-glutamine is bound by residues Asp-66 and Tyr-210. Residues Thr-229, 259-260 (RL), and 267-269 (MSK) each bind ATP. The 'KMSKS' region signature appears at 266 to 270 (VMSKR).

It belongs to the class-I aminoacyl-tRNA synthetase family. Monomer.

The protein resides in the cytoplasm. The enzyme catalyses tRNA(Gln) + L-glutamine + ATP = L-glutaminyl-tRNA(Gln) + AMP + diphosphate. The sequence is that of Glutamine--tRNA ligase from Clostridioides difficile (strain 630) (Peptoclostridium difficile).